A 357-amino-acid polypeptide reads, in one-letter code: Histidine biosynthesis bifunctional protein HisB (357 aa).

The histidinol-phosphatase stretch occupies residues 1–167; that stretch reads MNDKILFIDR…IHKYLMQNSH (167 aa). The active-site Nucleophile is aspartate 9. Aspartate 9 and aspartate 11 together coordinate Mg(2+). Aspartate 11 acts as the Proton donor in catalysis. 4 residues coordinate Zn(2+): cysteine 93, histidine 95, cysteine 101, and cysteine 103. Aspartate 130 is a binding site for Mg(2+). An imidazoleglycerol-phosphate dehydratase region spans residues 168–357; it reads RVAHIQRITN…QIPSSKGILL (190 aa).

In the N-terminal section; belongs to the histidinol-phosphatase family. The protein in the C-terminal section; belongs to the imidazoleglycerol-phosphate dehydratase family. Requires Mg(2+) as cofactor. The cofactor is Zn(2+).

The protein localises to the cytoplasm. The catalysed reaction is D-erythro-1-(imidazol-4-yl)glycerol 3-phosphate = 3-(imidazol-4-yl)-2-oxopropyl phosphate + H2O. It carries out the reaction L-histidinol phosphate + H2O = L-histidinol + phosphate. It functions in the pathway amino-acid biosynthesis; L-histidine biosynthesis; L-histidine from 5-phospho-alpha-D-ribose 1-diphosphate: step 6/9. Its pathway is amino-acid biosynthesis; L-histidine biosynthesis; L-histidine from 5-phospho-alpha-D-ribose 1-diphosphate: step 8/9. In Blochmanniella floridana, this protein is Histidine biosynthesis bifunctional protein HisB.